The chain runs to 651 residues: Endoplasmic reticulum chaperone BiP (651 aa).

An N-terminal signal peptide occupies residues 1–20 (MGLSTYVGIFLLCILTLSRC). Residues 36-39 (GTTY), Lys-96, 226-228 (GGT), 292-299 (EKAKRTLS), and 363-366 (GSTR) contribute to the ATP site. The nucleotide-binding (NBD) stretch occupies residues 125 to 279 (KPYMKVQVGS…KKKEGKDITK (155 aa)). Positions 399–499 (VQAGVISGVE…PRGLPQIEVT (101 aa)) are substrate-binding (SBD). The Prevents secretion from ER signature appears at 648–651 (KEEL).

It belongs to the heat shock protein 70 family.

It localises to the endoplasmic reticulum lumen. The enzyme catalyses ATP + H2O = ADP + phosphate + H(+). With respect to regulation, the chaperone activity is regulated by ATP-induced allosteric coupling of the nucleotide-binding (NBD) and substrate-binding (SBD) domains. In the ADP-bound and nucleotide-free (apo) states, the two domains have little interaction. In contrast, in the ATP-bound state the two domains are tightly coupled, which results in drastically accelerated kinetics in both binding and release of polypeptide substrates. J domain-containing co-chaperones stimulate the ATPase activity and are required for efficient substrate recognition. Functionally, endoplasmic reticulum chaperone that plays a key role in protein folding and quality control in the endoplasmic reticulum lumen. Involved in the correct folding of proteins and degradation of misfolded proteins. Acts as a key repressor of the unfolded protein response (UPR). This Echinococcus granulosus (Hydatid tapeworm) protein is Endoplasmic reticulum chaperone BiP.